A 510-amino-acid polypeptide reads, in one-letter code: Histidine ammonia-lyase (510 aa).

Positions Ala-143–Gly-145 form a cross-link, 5-imidazolinone (Ala-Gly). Ser-144 bears the 2,3-didehydroalanine (Ser) mark.

Belongs to the PAL/histidase family. Post-translationally, contains an active site 4-methylidene-imidazol-5-one (MIO), which is formed autocatalytically by cyclization and dehydration of residues Ala-Ser-Gly.

It localises to the cytoplasm. It carries out the reaction L-histidine = trans-urocanate + NH4(+). Its pathway is amino-acid degradation; L-histidine degradation into L-glutamate; N-formimidoyl-L-glutamate from L-histidine: step 1/3. This chain is Histidine ammonia-lyase, found in Shewanella pealeana (strain ATCC 700345 / ANG-SQ1).